The chain runs to 583 residues: Long-chain-fatty-acid--AMP ligase FadD26 (583 aa).

The protein belongs to the ATP-dependent AMP-binding enzyme family.

It carries out the reaction holo-[(phenol)carboxyphthiodiolenone synthase] + a long-chain fatty acid + ATP = a long-chain fatty acyl-[(phenol)carboxyphthiodiolenone synthase] + AMP + diphosphate. It catalyses the reaction eicosanoate + holo-[(phenol)carboxyphthiodiolenone synthase] + ATP = icosanoyl-[(phenol)carboxyphthiodiolenone synthase] + AMP + diphosphate. The catalysed reaction is holo-[(phenol)carboxyphthiodiolenone synthase] + docosanoate + ATP = docosanoyl-[(phenol)carboxyphthiodiolenone synthase] + AMP + diphosphate. Its pathway is lipid metabolism; fatty acid biosynthesis. In terms of biological role, catalyzes the activation of long-chain fatty acids as acyl-adenylates (acyl-AMP), which are then transferred to the multifunctional polyketide synthase PpsA for further chain extension. Catalyzes the adenylation of the long-chain fatty acids eicosanoate (C20) or docosanoate (C22), and potentially the very-long-chain fatty acid lignocerate (C24). Involved in the biosynthesis of phthiocerol dimycocerosate (DIM A) and phthiodiolone dimycocerosate (DIM B). The polypeptide is Long-chain-fatty-acid--AMP ligase FadD26 (fadD26) (Mycobacterium bovis (strain ATCC BAA-935 / AF2122/97)).